The primary structure comprises 1464 residues: DNA polymerase III PolC-type (1464 aa).

In terms of domain architecture, Exonuclease spans 426–582 (YVVFDVETTG…YDAEATGRLL (157 aa)).

Belongs to the DNA polymerase type-C family. PolC subfamily.

It is found in the cytoplasm. The enzyme catalyses DNA(n) + a 2'-deoxyribonucleoside 5'-triphosphate = DNA(n+1) + diphosphate. Required for replicative DNA synthesis. This DNA polymerase also exhibits 3' to 5' exonuclease activity. The chain is DNA polymerase III PolC-type from Streptococcus thermophilus (strain ATCC BAA-491 / LMD-9).